We begin with the raw amino-acid sequence, 489 residues long: Dipeptide and tripeptide permease B (489 aa).

Topologically, residues 1–27 (MNKPASIGLLQQPKPFFMIFFVELWER) are cytoplasmic. Residues 28–48 (FGYYGVQGILAVYFVHKLGFS) form a helical membrane-spanning segment. Residues 49 to 52 (QEQA) are Periplasmic-facing. Residues 53–73 (FTTFGAFAALVYGLIAIGGYV) traverse the membrane as a helical segment. Residues 74–82 (GDHLLGTKR) are Cytoplasmic-facing. The chain crosses the membrane as a helical span at residues 83–103 (TIVLGAIVLTVGYFMTGLSIL). Residues 104–106 (KPE) lie on the Periplasmic side of the membrane. A helical transmembrane segment spans residues 107–127 (LIFYALGTIAVGNGLFKANPA). Residues 128–146 (SLLSKCYPPKDPRLDGAFT) lie on the Cytoplasmic side of the membrane. A helical transmembrane segment spans residues 147–167 (LFYMSINIGSLFSLAIAPVIA). The Periplasmic portion of the chain corresponds to 168 to 171 (EKFG). The helical transmembrane segment at 172 to 192 (YAVTYNICGIGLIIALLVYVL) threads the bilayer. Over 193-212 (YRNTVRNIGSEPDHRPINYK) the chain is Cytoplasmic. The next 2 helical transmembrane spans lie at 213-233 (NLLL…WLMH) and 234-254 (NVKI…FIFF). At 255–267 (REAFKQDKVGRNK) the chain is on the cytoplasmic side. The helical transmembrane segment at 268-288 (MFVAFILMLQAIVFFILYAQM) threads the bilayer. Residues 289–311 (PTSLNFFAINNVHHQLLGFNINP) lie on the Periplasmic side of the membrane. A helical transmembrane segment spans residues 312-332 (VSFQALNPFWIVVASPILAAL). Topologically, residues 333–350 (YTHWGSRSKDLTMPAKFT) are cytoplasmic. The chain crosses the membrane as a helical span at residues 351–371 (VGMFLCSLGFLTAAAAGLWFA). Residues 372–375 (DEQG) are Periplasmic-facing. A helical transmembrane segment spans residues 376–396 (LTSPWFIVLVYLFQSLGELMI). Over 397–419 (SALGLAMVAALVPQYLMGFILGM) the chain is Cytoplasmic. Residues 420–440 (WYLTQATSFLLGGYVAAFTAI) traverse the membrane as a helical segment. Residues 441 to 456 (PEGITDPLETLPVYTN) lie on the Periplasmic side of the membrane. The helical transmembrane segment at 457–477 (VFGKIGITTFIVAIIMAITVP) threads the bilayer. Residues 478–489 (LLNRMMNGKQKA) are Cytoplasmic-facing.

It belongs to the major facilitator superfamily. Proton-dependent oligopeptide transporter (POT/PTR) (TC 2.A.17) family. DtpB subfamily.

The protein resides in the cell inner membrane. Its function is as follows. Proton-dependent permease that transports di- and tripeptides. This is Dipeptide and tripeptide permease B from Photorhabdus asymbiotica subsp. asymbiotica (strain ATCC 43949 / 3105-77) (Xenorhabdus luminescens (strain 2)).